Reading from the N-terminus, the 141-residue chain is Large ribosomal subunit protein uL13 (141 aa).

This sequence belongs to the universal ribosomal protein uL13 family. As to quaternary structure, part of the 50S ribosomal subunit.

In terms of biological role, this protein is one of the early assembly proteins of the 50S ribosomal subunit, although it is not seen to bind rRNA by itself. It is important during the early stages of 50S assembly. This Sulfurovum sp. (strain NBC37-1) protein is Large ribosomal subunit protein uL13.